The sequence spans 155 residues: Small ribosomal subunit protein bS6 (155 aa).

A disordered region spans residues 94 to 155 (EEHETEPSAM…RDDNSDGGQE (62 aa)). Residues 107–149 (RGDRGDRGDRRGGDRFGDRDRGDRGDRGSSRFGDRERPRRDDN) show a composition bias toward basic and acidic residues.

The protein belongs to the bacterial ribosomal protein bS6 family.

Its function is as follows. Binds together with bS18 to 16S ribosomal RNA. This Parvibaculum lavamentivorans (strain DS-1 / DSM 13023 / NCIMB 13966) protein is Small ribosomal subunit protein bS6.